The following is a 952-amino-acid chain: MAIEEMEKKYRISDIARELQVSPQEVLQFVKLEGGKVASTSSMVDQGMRELIFGHFSNEKKMVDETMKIRQEKQRRLSRLEEQSRKTYEKERQLKETLHSASVAPAVHEEKKEPVVPEVRLVVSVPDELVSSEKVEEIEQIEQPVQLEQPVMAAQADQTDQTDQTDQADQADRTDQVIQTDQPVQEEPLEEVPAPKEMPVKEEPSVNEQLVSFETPKNIGGLTVIGTLDMHSPFDRSSEAERKKKNRKKNFKEQADALKSEFDTTVKEEVAADEKGAVKKKPAKPPGETNAATPAGTASTAGAQPLKKGKKKKKPDVNDKVISANIRTTISGMDDSGGTGSRQKFRKLRKIERERESEAAEAFRESQQMIVRVTEYASPHELADLMGVTAKDIIQKCFSLGKFVTINQRLDKESIELIALEFGFEAEFISEVEATAVLIEADEPEDMQIRPPVITIMGHVDHGKTSLLDYIRNSNVVAGESGGITQHIGAYEVTVESDRKITFLDTPGHEAFTAMRARGAQVTDIVILVVAADDSVMPQTIEAINHAKAAGVPIVVAINKVDKPEANPEKIKTQLSEAGVLVEEWGGEYQCQEISAKKGIGIAELMEKVLAEAEIRELKGNFSREINANGIIVESELDKGKGVISTVLVQRGFLKIGDPFVAGNTMGKIRALMDERGKRILFAGPSQPVRVLGFEELPQSGDVLTVMSSDRDARDLAQKRQVIRREHEFRRSTRVKLDSIARQIKEGLMKELSMIIKADTDGSIQALADGLMKIQNEEVKVQIIHQGVGQITETDVLLAAASDAIIIGFRVRPNVNAKKLAEKEDLDVRFYSVIYHVLEDVEKALEGMLSPELHEESLGSLEVRQVFRVPKVGNVGGCYMLEGKVFRDSKVRLLREGVQIYDGQLDALRRFKDDVKEVDAGYECGISLKNYDDIKVGDIVEAYRIVEKKRKL.

4 disordered regions span residues 74-95 (QRRLSRLEEQSRKTYEKERQLK), 153-204 (AAQA…KEEP), 230-256 (MHSPFDRSSEAERKKKNRKKNFKEQAD), and 273-319 (DEKG…DVND). The span at 153–168 (AAQADQTDQTDQTDQA) shows a compositional bias: low complexity. Residues 232-242 (SPFDRSSEAER) are compositionally biased toward basic and acidic residues. Over residues 286–303 (PGETNAATPAGTASTAGA) the composition is skewed to low complexity. The tr-type G domain occupies 449–619 (IRPPVITIMG…LAEAEIRELK (171 aa)). The segment at 458 to 465 (GHVDHGKT) is G1. 458 to 465 (GHVDHGKT) lines the GTP pocket. A G2 region spans residues 483–487 (GITQH). Positions 505–508 (DTPG) are G3. GTP is bound by residues 505 to 509 (DTPGH) and 559 to 562 (NKVD). The G4 stretch occupies residues 559–562 (NKVD). Residues 595–597 (SAK) are G5.

Belongs to the TRAFAC class translation factor GTPase superfamily. Classic translation factor GTPase family. IF-2 subfamily.

It localises to the cytoplasm. Functionally, one of the essential components for the initiation of protein synthesis. Protects formylmethionyl-tRNA from spontaneous hydrolysis and promotes its binding to the 30S ribosomal subunits. Also involved in the hydrolysis of GTP during the formation of the 70S ribosomal complex. The protein is Translation initiation factor IF-2 of Chlorobium limicola (strain DSM 245 / NBRC 103803 / 6330).